We begin with the raw amino-acid sequence, 431 residues long: Serine/threonine-protein kinase Sgk1 (431 aa).

Residues 1 to 60 are necessary for localization to the mitochondria; it reads MTVKTEAAKGTLTYSRMRGMVAILIAFMKQRRMGLNDFIQKIANNSYACKHPEVQSILKI. Residues 66–92 are disordered; it reads PELMNANPSPPPSPSQQINLGPSSNPH. The residue at position 74 (S74) is a Phosphoserine. At S78 the chain carries Phosphoserine; by MAPK7. The segment covering 81–91 has biased composition (polar residues); it reads QQINLGPSSNP. Residues 98-355 form the Protein kinase domain; that stretch reads FHFLKVIGKG…FMEIKSHVFF (258 aa). ATP is bound by residues 104–112 and K127; that span reads IGKGSFGKV. Residues 131 to 141 carry the Nuclear localization signal motif; the sequence is KKAILKKKEEK. D222 (proton acceptor) is an active-site residue. T256 carries the phosphothreonine; by PDPK1 modification. An AGC-kinase C-terminal domain is found at 356 to 431; that stretch reads SLINWDDLIN…SYAPPTDSFL (76 aa). Phosphothreonine; by PKA is present on T369. Phosphoserine is present on residues S397, S401, and S422.

Belongs to the protein kinase superfamily. AGC Ser/Thr protein kinase family. Homodimer; disulfide-linked. Forms a trimeric complex with FBXW7 and NOTCH1. Interacts with MAPK3/ERK1, MAPK1/ERK2, MAP2K1/MEK1, MAP2K2/MEK2, NEDD4, NEDD4L, MAPT/TAU, MAPK7, CREB1, SLC9A3R2/NHERF2 and KCNJ1/ROMK1. Associates with the mammalian target of rapamycin complex 2 (mTORC2) via an interaction with MAPKAP1/SIN1. Post-translationally, regulated by phosphorylation. Activated by phosphorylation on Ser-422 by mTORC2, transforming it into a substrate for PDPK1 which phosphorylates it on Thr-256. Phosphorylation on Ser-397 and Ser-401 are also essential for its activity. Phosphorylation on Ser-78 by MAPK7 is required for growth factor-induced cell cycle progression. Ubiquitinated by NEDD4L; which promotes proteasomal degradation. Ubiquitinated by SYVN1 at the endoplasmic reticulum; which promotes rapid proteasomal degradation and maintains a high turnover rate in resting cells. Isoform 2 shows enhanced stability. In terms of tissue distribution, expressed in most tissues with highest levels in the pancreas, followed by placenta, kidney and lung. Isoform 2 is strongly expressed in brain and pancreas, weaker in heart, placenta, lung, liver and skeletal muscle.

It localises to the cytoplasm. The protein localises to the nucleus. Its subcellular location is the endoplasmic reticulum membrane. It is found in the cell membrane. The protein resides in the mitochondrion. It catalyses the reaction L-seryl-[protein] + ATP = O-phospho-L-seryl-[protein] + ADP + H(+). It carries out the reaction L-threonyl-[protein] + ATP = O-phospho-L-threonyl-[protein] + ADP + H(+). Two specific sites, one in the kinase domain (Thr-256) and the other in the C-terminal regulatory region (Ser-422), need to be phosphorylated for its full activation. Phosphorylation at Ser-397 and Ser-401 are also essential for its activity. Activated by WNK1, WNK2, WNK3 and WNK4; which promote phosphorylation by mTORC2. Its function is as follows. Serine/threonine-protein kinase which is involved in the regulation of a wide variety of ion channels, membrane transporters, cellular enzymes, transcription factors, neuronal excitability, cell growth, proliferation, survival, migration and apoptosis. Plays an important role in cellular stress response. Contributes to regulation of renal Na(+) retention, renal K(+) elimination, salt appetite, gastric acid secretion, intestinal Na(+)/H(+) exchange and nutrient transport, insulin-dependent salt sensitivity of blood pressure, salt sensitivity of peripheral glucose uptake, cardiac repolarization and memory consolidation. Up-regulates Na(+) channels: SCNN1A/ENAC, SCN5A and ASIC1/ACCN2, K(+) channels: KCNJ1/ROMK1, KCNA1-5, KCNQ1-5 and KCNE1, epithelial Ca(2+) channels: TRPV5 and TRPV6, chloride channels: BSND, CLCN2 and CFTR, glutamate transporters: SLC1A3/EAAT1, SLC1A2 /EAAT2, SLC1A1/EAAT3, SLC1A6/EAAT4 and SLC1A7/EAAT5, amino acid transporters: SLC1A5/ASCT2, SLC38A1/SN1 and SLC6A19, creatine transporter: SLC6A8, Na(+)/dicarboxylate cotransporter: SLC13A2/NADC1, Na(+)-dependent phosphate cotransporter: SLC34A2/NAPI-2B, glutamate receptor: GRIK2/GLUR6. Up-regulates carriers: SLC9A3/NHE3, SLC12A1/NKCC2, SLC12A3/NCC, SLC5A3/SMIT, SLC2A1/GLUT1, SLC5A1/SGLT1 and SLC15A2/PEPT2. Regulates enzymes: GSK3A/B, PMM2 and Na(+)/K(+) ATPase, and transcription factors: CTNNB1 and nuclear factor NF-kappa-B. Stimulates sodium transport into epithelial cells by enhancing the stability and expression of SCNN1A/ENAC. This is achieved by phosphorylating the NEDD4L ubiquitin E3 ligase, promoting its interaction with 14-3-3 proteins, thereby preventing it from binding to SCNN1A/ENAC and targeting it for degradation. Regulates store-operated Ca(+2) entry (SOCE) by stimulating ORAI1 and STIM1. Regulates KCNJ1/ROMK1 directly via its phosphorylation or indirectly via increased interaction with SLC9A3R2/NHERF2. Phosphorylates MDM2 and activates MDM2-dependent ubiquitination of p53/TP53. Phosphorylates MAPT/TAU and mediates microtubule depolymerization and neurite formation in hippocampal neurons. Phosphorylates SLC2A4/GLUT4 and up-regulates its activity. Phosphorylates APBB1/FE65 and promotes its localization to the nucleus. Phosphorylates MAPK1/ERK2 and activates it by enhancing its interaction with MAP2K1/MEK1 and MAP2K2/MEK2. Phosphorylates FBXW7 and plays an inhibitory role in the NOTCH1 signaling. Phosphorylates FOXO1 resulting in its relocalization from the nucleus to the cytoplasm. Phosphorylates FOXO3, promoting its exit from the nucleus and interference with FOXO3-dependent transcription. Phosphorylates BRAF and MAP3K3/MEKK3 and inhibits their activity. Phosphorylates SLC9A3/NHE3 in response to dexamethasone, resulting in its activation and increased localization at the cell membrane. Phosphorylates CREB1. Necessary for vascular remodeling during angiogenesis. Sustained high levels and activity may contribute to conditions such as hypertension and diabetic nephropathy. Isoform 2 exhibited a greater effect on cell plasma membrane expression of SCNN1A/ENAC and Na(+) transport than isoform 1. This chain is Serine/threonine-protein kinase Sgk1 (SGK1), found in Homo sapiens (Human).